Here is a 410-residue protein sequence, read N- to C-terminus: Acetate kinase (410 aa).

A Mg(2+)-binding site is contributed by N7. Residue K14 participates in ATP binding. Position 88 (R88) interacts with substrate. D145 (proton donor/acceptor) is an active-site residue. ATP-binding positions include 203 to 207 (HAGNG), 278 to 280 (DTR), and 326 to 330 (GIGEN). E379 is a Mg(2+) binding site.

The protein belongs to the acetokinase family. In terms of assembly, homodimer. The cofactor is Mg(2+). Requires Mn(2+) as cofactor.

It is found in the cytoplasm. The catalysed reaction is acetate + ATP = acetyl phosphate + ADP. It functions in the pathway metabolic intermediate biosynthesis; acetyl-CoA biosynthesis; acetyl-CoA from acetate: step 1/2. In terms of biological role, catalyzes the formation of acetyl phosphate from acetate and ATP. Can also catalyze the reverse reaction. In Onion yellows phytoplasma (strain OY-M), this protein is Acetate kinase.